Reading from the N-terminus, the 199-residue chain is Ras-related and estrogen-regulated growth inhibitor (199 aa).

Residues 13-20 (GRAGVGKS), 60-64 (DTAGQ), and 118-121 (NKAD) each bind GTP.

The protein belongs to the small GTPase superfamily. Ras family. As to expression, detected in heart, brain, placenta, lung, liver, skin, kidney and pancreas. Detected in estrogen receptor-positive breast-derived cell lines, but not in estrogen receptor-negative cell lines. Expression is decreased or lost in a significant proportion of primary breast tumors with poor clinical prognosis.

The protein localises to the cytoplasm. It catalyses the reaction GTP + H2O = GDP + phosphate + H(+). In terms of biological role, binds GDP/GTP and possesses intrinsic GTPase activity. Has higher affinity for GDP than for GTP. In cell lines overexpression leads to a reduction in the rate of proliferation, colony formation and in tumorigenic potential. The polypeptide is Ras-related and estrogen-regulated growth inhibitor (RERG) (Homo sapiens (Human)).